The sequence spans 217 residues: Somatotropin (217 aa).

A signal peptide spans 1–26; it reads MMAAGPRTSLLLAFALLCLPWTQVVG. A Zn(2+)-binding site is contributed by His-46. Cys-79 and Cys-190 are oxidised to a cystine. Ser-132 is subject to Phosphoserine. Glu-199 contributes to the Zn(2+) binding site. Cys-207 and Cys-215 are oxidised to a cystine.

Belongs to the somatotropin/prolactin family.

It is found in the secreted. In terms of biological role, plays an important role in growth control. Its major role in stimulating body growth is to stimulate the liver and other tissues to secrete IGF1. It stimulates both the differentiation and proliferation of myoblasts. It also stimulates amino acid uptake and protein synthesis in muscle and other tissues. This is Somatotropin (GH1) from Bos mutus grunniens (Wild yak).